The chain runs to 153 residues: Histone H2A (153 aa).

Disordered regions lie at residues M1–S27 and K131–A153. Residues A132 to T147 show a composition bias toward low complexity. The SPKK motif signature appears at S149–K152.

The protein belongs to the histone H2A family. As to quaternary structure, the nucleosome is a histone octamer containing two molecules each of H2A, H2B, H3 and H4 assembled in one H3-H4 heterotetramer and two H2A-H2B heterodimers. The octamer wraps approximately 147 bp of DNA.

The protein resides in the nucleus. It localises to the chromosome. Its function is as follows. Core component of nucleosome. Nucleosomes wrap and compact DNA into chromatin, limiting DNA accessibility to the cellular machineries which require DNA as a template. Histones thereby play a central role in transcription regulation, DNA repair, DNA replication and chromosomal stability. DNA accessibility is regulated via a complex set of post-translational modifications of histones, also called histone code, and nucleosome remodeling. The protein is Histone H2A of Euphorbia esula (Leafy spurge).